Here is a 1341-residue protein sequence, read N- to C-terminus: Restriction of telomere capping protein 1 (1341 aa).

Residues 1–39 (MSLSPHVENASIPKGSTPIPKNRNVSSIGKGEFLGSSSS) are disordered. WD repeat units follow at residues 207–248 (NKFS…SIDN), 256–296 (EHTR…SKSS), 305–342 (TASD…YKFA), 367–406 (AHTG…NAAE), 439–486 (NTGY…IPKH), and 489–527 (LSET…TVLE). Disordered regions lie at residues 559–593 (PELQ…IGGI), 600–619 (TGLT…GPTF), 630–651 (ASSF…ENRE), 736–765 (KNAT…DDDD), and 789–830 (NEKV…DRAR). Residues 630-644 (ASSFNSSSASLTSLT) are compositionally biased toward low complexity. Residues 753–765 (DDGDDDDDDDDDD) show a composition bias toward acidic residues. The span at 814-823 (SSISSISASR) shows a compositional bias: low complexity. The WD 7 repeat unit spans residues 843–883 (KIQTLVDLISIATHNASVYLSIDDLTNFKIWILIRDSLLWD). Disordered regions lie at residues 941–962 (AFRA…KLKE) and 1013–1043 (DEHE…KSIP). Composition is skewed to basic and acidic residues over residues 951–962 (DAEKKPVSKLKE) and 1015–1027 (HEHQ…HDSP). 6 positions are modified to phosphoserine: Ser-1036, Ser-1080, Ser-1087, Ser-1089, Ser-1123, and Ser-1133. WD repeat units follow at residues 1129–1169 (SRPD…KQLY) and 1216–1255 (LFGI…LITN). Residues 1293-1335 (CVLCERPLKKLTMVILPCGHEGHFQCIQEWFLDENEQECPGGC) form an RING-type; degenerate zinc finger.

This sequence belongs to the WD repeat RTC1 family. Component of the SEA complex composed of at least IML1/SEA1, RTC1/SEA2, MTC5/SEA3, NPR2, NPR3, SEA4, SEC13 and SEH1. Interacts with ribosomes.

Its subcellular location is the vacuole membrane. In terms of biological role, component of the SEA complex which coats the vacuolar membrane and is involved in intracellular trafficking, autophagy, response to nitrogen starvation, and amino acid biogenesis. May be involved in a process influencing telomere capping. This Saccharomyces cerevisiae (strain ATCC 204508 / S288c) (Baker's yeast) protein is Restriction of telomere capping protein 1 (RTC1).